A 62-amino-acid polypeptide reads, in one-letter code: U-myrmeciitoxin(01)-Mg3a (62 aa).

Residues 1 to 24 form the signal peptide; sequence MKTTVILLLAIAIIFAIMTTLTSA.

Expressed by the venom gland.

It localises to the secreted. In terms of biological role, may have antimicrobial properties, like most ant linear peptides. This chain is U-myrmeciitoxin(01)-Mg3a, found in Myrmecia gulosa (Red bulldog ant).